A 61-amino-acid polypeptide reads, in one-letter code: UPF0370 protein Spro_3503 (61 aa).

The helical transmembrane segment at Trp-3–Ile-23 threads the bilayer. The span at Lys-38–Asn-48 shows a compositional bias: basic and acidic residues. The disordered stretch occupies residues Lys-38–Lys-61. Acidic residues predominate over residues Ala-49–Lys-61.

Belongs to the UPF0370 family.

It localises to the cell membrane. The polypeptide is UPF0370 protein Spro_3503 (Serratia proteamaculans (strain 568)).